Here is a 318-residue protein sequence, read N- to C-terminus: Cytochrome c biogenesis protein CcsA (318 aa).

A run of 8 helical transmembrane segments spans residues 17–37 (VLALGLAAFALLLLAIPISFW), 45–65 (SAVVTLLVALANLVLTAQLVL), 75–95 (ISNLYESLCFLAWACTLAQLL), 104–124 (IVSAAATPMALLCVAFASFAL), 149–169 (VIMCSYAALLVGSFLSMAVLF), 224–244 (TITVGFLLLTLGLISGAVWAN), 258–275 (TWALICWMVYAAYLHTRF), and 287–307 (VAVAGIVVIVVCYIGVNLLGI).

It belongs to the CcmF/CycK/Ccl1/NrfE/CcsA family. May interact with ccs1.

It localises to the cellular thylakoid membrane. Required during biogenesis of c-type cytochromes (cytochrome c6 and cytochrome f) at the step of heme attachment. The protein is Cytochrome c biogenesis protein CcsA of Prochlorococcus marinus (strain MIT 9313).